The primary structure comprises 536 residues: Glucose-6-phosphate isomerase (536 aa).

Glu345 (proton donor) is an active-site residue. Residues His376 and Lys505 contribute to the active site.

It belongs to the GPI family.

It localises to the cytoplasm. It catalyses the reaction alpha-D-glucose 6-phosphate = beta-D-fructose 6-phosphate. The protein operates within carbohydrate biosynthesis; gluconeogenesis. It functions in the pathway carbohydrate degradation; glycolysis; D-glyceraldehyde 3-phosphate and glycerone phosphate from D-glucose: step 2/4. Functionally, catalyzes the reversible isomerization of glucose-6-phosphate to fructose-6-phosphate. This is Glucose-6-phosphate isomerase from Ruegeria sp. (strain TM1040) (Silicibacter sp.).